We begin with the raw amino-acid sequence, 227 residues long: MRSPFPVPMVPLTIKTWQKKLPNWLTIYRIFIAVPTIIFLGLNHLLGSVASFTVLGNVTIHLQVSLFIGGVLFITAVISDYLDGYWARKWRVVSNFGKLWDPLADKVIINGVLIALVAYGYFHFSFLIVIVLRDLVLDGLRFYAQEKQLIIPANQWGKWKTTWQMIAILMSCFVFSFSLKETNSANTKIFYWAIVHLPYYLATAFSLVSFGIYAQQIYKTIKVKVKL.

The next 5 membrane-spanning stretches (helical) occupy residues 30-50, 58-78, 112-132, 159-179, and 192-212; these read IFIAVPTIIFLGLNHLLGSVA, VTIHLQVSLFIGGVLFITAVI, VLIALVAYGYFHFSFLIVIVL, WKTTWQMIAILMSCFVFSFSL, and WAIVHLPYYLATAFSLVSFGI.

This sequence belongs to the CDP-alcohol phosphatidyltransferase class-I family.

The protein localises to the cell membrane. It carries out the reaction a CDP-1,2-diacyl-sn-glycerol + sn-glycerol 3-phosphate = a 1,2-diacyl-sn-glycero-3-phospho-(1'-sn-glycero-3'-phosphate) + CMP + H(+). It functions in the pathway phospholipid metabolism; phosphatidylglycerol biosynthesis; phosphatidylglycerol from CDP-diacylglycerol: step 1/2. Functionally, this protein catalyzes the committed step to the synthesis of the acidic phospholipids. This chain is CDP-diacylglycerol--glycerol-3-phosphate 3-phosphatidyltransferase (pgsA), found in Mycoplasma pneumoniae (strain ATCC 29342 / M129 / Subtype 1) (Mycoplasmoides pneumoniae).